The sequence spans 518 residues: Chromosomal replication initiator protein DnaA (518 aa).

The tract at residues 1–72 (MTLAEFWPLC…VREELAAGRS (72 aa)) is domain I, interacts with DnaA modulators. The domain II stretch occupies residues 72–180 (SAFVFKPGEG…DAEEARYEQT (109 aa)). The tract at residues 145–172 (EPRQAAGSASRPESVAVAKARTDVQRDA) is disordered. The interval 181–397 (NLSPDYTFDT…GAFNRVGASS (217 aa)) is domain III, AAA+ region. Residues G225, G227, K228, and T229 each contribute to the ATP site. The interval 398 to 518 (RFMNRPVIDI…YEKLLILIQN (121 aa)) is domain IV, binds dsDNA.

Belongs to the DnaA family. In terms of assembly, oligomerizes as a right-handed, spiral filament on DNA at oriC.

The protein resides in the cytoplasm. Its function is as follows. Plays an essential role in the initiation and regulation of chromosomal replication. ATP-DnaA binds to the origin of replication (oriC) to initiate formation of the DNA replication initiation complex once per cell cycle. Binds the DnaA box (a 9 base pair repeat at the origin) and separates the double-stranded (ds)DNA. Forms a right-handed helical filament on oriC DNA; dsDNA binds to the exterior of the filament while single-stranded (ss)DNA is stabiized in the filament's interior. The ATP-DnaA-oriC complex binds and stabilizes one strand of the AT-rich DNA unwinding element (DUE), permitting loading of DNA polymerase. After initiation quickly degrades to an ADP-DnaA complex that is not apt for DNA replication. Binds acidic phospholipids. This Neisseria meningitidis serogroup B (strain ATCC BAA-335 / MC58) protein is Chromosomal replication initiator protein DnaA.